The following is a 420-amino-acid chain: UPF0053 protein HI_0107 (420 aa).

One can recognise a CNNM transmembrane domain in the interval 2-190 (DSIPLSTLFI…GEATPNEQHP (189 aa)). 4 helical membrane-spanning segments follow: residues 3–23 (SIPLSTLFIILIICLVLSAYF), 65–85 (FILIFNNLVNISASAIATVIG), 92–112 (AGVAIATGLLTFVMLVFSEIF), and 126–146 (FFSSHILTSLLKIFYPLVWLM). CBS domains lie at 208-268 (MVPR…KNEF) and 273-333 (LIRA…FTTS).

This sequence belongs to the UPF0053 family.

It is found in the cell membrane. The polypeptide is UPF0053 protein HI_0107 (Haemophilus influenzae (strain ATCC 51907 / DSM 11121 / KW20 / Rd)).